The chain runs to 399 residues: MIELDRLDLGGGRRLVITSEPDAAVPQVRDADGHWRRAGPGDGVAEAMLDALNQNPGTTKHGNFTLLSWASQTARGERPITVDQTNESVIVGDAAVVKWATHLQEGPHPAPARIKALRGNGFRGMPMPWGLVTWQTADHPETLVVTVDEYLPDAVDGWTWAVALVTDAAQDRAAVPALVDAVTAVGCVVAELHAAQADTARPATAADARSWREAALETVETAATLGTSVSGELLRARREDVEAVVGTLGDLAGIPVLAGHGDLHVGQVLRAGGRYVVTDFDGNPVLPAEARVKPVPAALDVAGMAQSLAHVAIVACKYTELAPAALADVDRLARTTFVGAYTDRLETLGHRSVYDPAPLRALRLQQVLREIIYAARHLPRWMYVPDAALPALLDEGTST.

Residues K98, 149–151 (EYL), and D156 contribute to the ATP site. D262 is a binding site for D-glucosamine. The Mg(2+) site is built by Q267, D279, and D281. Positions 366–381 (QVLREIIYAARHLPRW) match the Substrate specificity determinant motif motif. E370 provides a ligand contact to D-glucosamine.

This sequence belongs to the actinobacterial glucosamine kinase family. Monomer. It depends on Mg(2+) as a cofactor.

It catalyses the reaction D-glucosamine + ATP = D-glucosamine 6-phosphate + ADP + H(+). Its function is as follows. Catalyzes the ATP-dependent phosphorylation of D-glucosamine (GlcN) to D-glucosamine 6-phosphate. May be involved in the phosphorylation of acquired extracellular GlcN derived from the hydrolysis of chitosan, i.e., in the incorporation of exogenous GlcN into the bacterial GlcNAc metabolism. Is unable to phosphorylate maltose. The polypeptide is Glucosamine kinase (Mycolicibacterium smegmatis (strain ATCC 700084 / mc(2)155) (Mycobacterium smegmatis)).